The following is a 236-amino-acid chain: Syntaxin-8 (236 aa).

Over 1 to 215 the chain is Cytoplasmic; it reads MAPDPWFSTY…LVDRKSTSCG (215 aa). Residues 42 to 65 adopt a coiled-coil conformation; sequence VTIRALLQKLKEKIALLKDLLLRA. One can recognise a t-SNARE coiled-coil homology domain in the interval 145–207; it reads QKIIQEQDAG…RTETRRVNLV (63 aa). Ser160 carries the post-translational modification Phosphoserine. A helical; Anchor for type IV membrane protein membrane pass occupies residues 216 to 232; the sequence is MIMVILLLLVAIVVVAV. Topologically, residues 233 to 236 are vesicular; the sequence is WPTK.

This sequence belongs to the syntaxin family. As to quaternary structure, forms a SNARE complex with STX7, VTI1B and VAMP8 which functions in the homotypic fusion of late endosomes. Part of the SNARE core complex containing STX7, VAMP8 and VTI1B. Interacts with VAMP8. Interacts with HECTD3. Interacts with TPC1. Ubiquitinated by HECTD3.

It is found in the membrane. In terms of biological role, vesicle trafficking protein that functions in the early secretory pathway, possibly by mediating retrograde transport from cis-Golgi membranes to the ER. This is Syntaxin-8 (STX8) from Bos taurus (Bovine).